Consider the following 244-residue polypeptide: Guanine nucleotide exchange factor rei-1 (244 aa).

2 coiled-coil regions span residues 6-39 and 81-144; these read DQLISIRKQLENLNNATDDINSYEMKLETVKKQF and VQQA…KAEK. The interval 221–244 is disordered; that stretch reads DQIHQERSSQSSLAPSSDAESDSS. The segment covering 228 to 238 has biased composition (low complexity); it reads SSQSSLAPSSD.

This sequence belongs to the SH3BP5 family. In terms of assembly, homodimer, tetramer and multimer. Interacts with rab-11.1. Binds preferentially to the GDP-bound form of rab-11.1. In terms of tissue distribution, expressed in germ cells.

It localises to the cytoplasmic granule. The protein localises to the golgi apparatus membrane. In terms of biological role, guanine nucleotide exchange factor for Rab GTPase Rab-11.1. Spatially and temporally regulates the distribution of Rab-11.1 to target membranes during embryogenesis. Plays a role in cytokinesis, probably by targeting rab-11.1 to the cleavage furrows. The polypeptide is Guanine nucleotide exchange factor rei-1 (Caenorhabditis elegans).